A 285-amino-acid chain; its full sequence is Probable ribosomal RNA small subunit methyltransferase A (285 aa).

S-adenosyl-L-methionine-binding residues include His-29, Leu-31, Gly-58, Glu-79, Asp-107, and Asn-122.

This sequence belongs to the class I-like SAM-binding methyltransferase superfamily. rRNA adenine N(6)-methyltransferase family. RsmA subfamily.

It localises to the cytoplasm. Functionally, specifically dimethylates two adjacent adenosines in the loop of a conserved hairpin near the 3'-end of 16S rRNA in the 30S particle. May play a critical role in biogenesis of 30S subunits. In Haloarcula marismortui (strain ATCC 43049 / DSM 3752 / JCM 8966 / VKM B-1809) (Halobacterium marismortui), this protein is Probable ribosomal RNA small subunit methyltransferase A.